The sequence spans 225 residues: Doublesex- and mab-3-related transcription factor C1 (225 aa).

The span at 1-12 shows a compositional bias: basic and acidic residues; the sequence is MQRPSGSREVRK. Disordered stretches follow at residues 1 to 49 and 179 to 216; these read MQRP…SHVH and QTRH…LPSG. Positions 27 to 37 are enriched in basic residues; the sequence is RVKKHVVRRQK.

Belongs to the DMRT family.

The polypeptide is Doublesex- and mab-3-related transcription factor C1 (Dmrtc1) (Rattus norvegicus (Rat)).